Reading from the N-terminus, the 68-residue chain is Conotoxin VnMMSK-01 (68 aa).

The first 20 residues, 1–20 (MMSKLGVLLTICLLLFPLTA), serve as a signal peptide directing secretion. The propeptide occupies 21-50 (VPMDGDQPADLPALRTQDFEPERSPWFDPV). 3 cysteine pairs are disulfide-bonded: cysteine 53/cysteine 65, cysteine 54/cysteine 61, and cysteine 58/cysteine 64. Proline 63 is modified (4-hydroxyproline).

It belongs to the conotoxin M superfamily. In terms of tissue distribution, expressed by the venom duct.

It is found in the secreted. The sequence is that of Conotoxin VnMMSK-01 from Conus ventricosus (Mediterranean cone).